A 476-amino-acid chain; its full sequence is Glycogen synthase (476 aa).

Lysine 15 provides a ligand contact to ADP-alpha-D-glucose.

This sequence belongs to the glycosyltransferase 1 family. Bacterial/plant glycogen synthase subfamily.

It carries out the reaction [(1-&gt;4)-alpha-D-glucosyl](n) + ADP-alpha-D-glucose = [(1-&gt;4)-alpha-D-glucosyl](n+1) + ADP + H(+). It participates in glycan biosynthesis; glycogen biosynthesis. Synthesizes alpha-1,4-glucan chains using ADP-glucose. The protein is Glycogen synthase of Streptococcus agalactiae serotype Ia (strain ATCC 27591 / A909 / CDC SS700).